A 536-amino-acid chain; its full sequence is MFKNALRRAGVAAPRISRVAQRGYAEAKATPTEVTSILEERIRGVSGEANLNETGRVLSVGDGIARVFGLNNIQAEELVEFASGVKGMALNLEAGQVGIVLFGSDRLVKEGETVKRSGSIVDVPVGPALLGRVVDALGNPIDGKGPIETEFRIRAQVKAPGILPRTSVNEPMQTGLKAVDALVPIGRGQRELIIGDRQTGKTQIAIDTILNQKRWNYGQDEKKKLYCVYVAVGQKRSTVAQLVQTLEHHDALKYSIIVAATASEAAPLQYLAPFTGTAMGEWFRDNGKGALIVFDDLSKQAVAYRQMSLLLRRPPGREAYPGDVFYLHSRLLERAAKMNEREGGGSLTALPIIETQGGDVSAYIPTNVISITDGQIFLEAELFYKGIRPAINVGLSVSRVGSAAQVKAMKQVAGSLKLFLAQYREVAAFAQFGSDLDASTKQTLTRGERLTLLLKQKQASPMSSEEMVPLIYAGVNGYIDNIPVKQVEKFEAEFVSYLHANESDLLKDIAATGELSKENLEKLKSITENFVGSFAK.

Residues 1-24 (MFKNALRRAGVAAPRISRVAQRGY) constitute a mitochondrion transit peptide. Position 195–202 (195–202 (GDRQTGKT)) interacts with ATP.

F-type ATP synthases have 2 components, the catalytic core F(1) and the membrane-embedded component F(0), linked together by a central stalk and a peripheral stalk. The central stalk, also called rotor shaft, is often seen as part of F(1). The peripheral stalk is seen as part of F(0). F(0) contains the membrane channel next to the rotor. F-type ATP synthases form dimers but each monomer functions independently in ATP generation. The dimer consists of 17 different polypeptides: ATP1 (subunit alpha, 3 molecules per monomer, part of F(1)), ATP2 (subunit beta, 3 copies per monomer, part of F(1)), ATP3 (subunit gamma, part of the central stalk), ATP4 (subunit b, part of the peripheral stalk), ATP5/OSCP (subunit 5/OSCP, part of the peripheral stalk), ATP6 (subunit a, part of the peripheral stalk), ATP7 (subunit d, part of the peripheral stalk), ATP8 (subunit 8, part of the peripheral stalk), OLI1 (subunit c, part of the rotor, 10 molecules per monomer), ATP14 (subunit h, part of the peripheral stalk), ATP15 (subunit epsilon, part of the central stalk), ATP16 (subunit delta, part of the central stalk), ATP17 (subunit f, part of the peripheral stalk), ATP18 (subunit i/j, part of the peripheral stalk), ATP19 (subunit k, dimer-specific, at interface between monomers), ATP20 (subunit g, at interface between monomers), TIM11 (subunit e, at interface between monomers).

It localises to the mitochondrion inner membrane. Functionally, mitochondrial membrane ATP synthase (F(1)F(0) ATP synthase or Complex V) produces ATP from ADP in the presence of a proton gradient across the membrane which is generated by electron transport complexes of the respiratory chain. F-type ATP synthases consist of two structural domains, F(1) - containing the extramembraneous catalytic core, and F(0) - containing the membrane proton channel, linked together by a central stalk and a peripheral stalk. During catalysis, ATP synthesis in the catalytic domain of F(1) is coupled via a rotary mechanism of the central stalk subunits to proton translocation. Subunits alpha/ATP1 and beta/ATP2 form the catalytic core in F(1). Rotation of the central stalk against the surrounding alpha/ATP1(3)beta/ATP2(3) subunits leads to hydrolysis of ATP in three separate catalytic sites on the beta/ATP2 subunits. Subunit alpha/ATP1 does not bear the catalytic high-affinity ATP-binding sites. The chain is ATP synthase subunit alpha, mitochondrial from Yarrowia lipolytica (strain CLIB 122 / E 150) (Yeast).